Reading from the N-terminus, the 822-residue chain is Glycerol-3-phosphate acyltransferase (822 aa).

Positions 306–311 match the HXXXXD motif motif; it reads CHRSHM. The segment at 803-822 is disordered; the sequence is ASSSAEMEAESQAVEETTQE.

It belongs to the GPAT/DAPAT family.

Its subcellular location is the cell inner membrane. The enzyme catalyses sn-glycerol 3-phosphate + an acyl-CoA = a 1-acyl-sn-glycero-3-phosphate + CoA. The protein operates within phospholipid metabolism; CDP-diacylglycerol biosynthesis; CDP-diacylglycerol from sn-glycerol 3-phosphate: step 1/3. The sequence is that of Glycerol-3-phosphate acyltransferase from Pectobacterium carotovorum subsp. carotovorum (strain PC1).